The primary structure comprises 1079 residues: BRD4-interacting chromatin-remodeling complex-associated protein-like (1079 aa).

Disordered stretches follow at residues 51 to 79 (NSSN…LPLS) and 509 to 604 (LHLS…TPGT). Positions 68–79 (LGEGPSDGLPLS) are enriched in low complexity. Polar residues predominate over residues 544–576 (SSASTAHPSLGSAVQSGSSGSNFTGDQLTQPNR). Over residues 590–604 (SSSKSTSTFSNTPGT) the composition is skewed to low complexity. Ser-623 carries the post-translational modification Phosphoserine. Disordered stretches follow at residues 669-691 (EKVV…GGQK), 837-877 (TQFG…NHDQ), and 917-954 (TSEE…TESK). Composition is skewed to basic and acidic residues over residues 918-928 (SEEKASRREPL) and 938-952 (EGHR…HGTE). Ser-980 carries the post-translational modification Phosphoserine.

Component of the multiprotein chromatin-remodeling complexes SWI/SNF: SWI/SNF-A (BAF), SWI/SNF-B (PBAF) and related complexes. The canonical complex contains a catalytic subunit (either SMARCA4/BRG1/BAF190A or SMARCA2/BRM/BAF190B) and at least SMARCE1, ACTL6A/BAF53, SMARCC1/BAF155, SMARCC2/BAF170, and SMARCB1/SNF5/BAF47. Other subunits specific to each of the complexes may also be present permitting several possible combinations developmentally and tissue specific. Component of the SWI/SNF (GBAF) subcomplex, which includes at least BICRA or BICRAL (mutually exclusive), BRD9, SS18, the core BAF subunits, SMARCA2/BRM, SMARCA4/BRG1/BAF190A, ACTL6A/BAF53, SMARCC1/BAF155, and SMARCD1/BAF60A.

Functionally, component of SWI/SNF chromatin remodeling subcomplex GBAF that carries out key enzymatic activities, changing chromatin structure by altering DNA-histone contacts within a nucleosome in an ATP-dependent manner. The protein is BRD4-interacting chromatin-remodeling complex-associated protein-like of Homo sapiens (Human).